Reading from the N-terminus, the 364-residue chain is Probable dual-specificity RNA methyltransferase RlmN (364 aa).

Catalysis depends on E106, which acts as the Proton acceptor. Residues 112–350 (YPRRNTVCIS…SCTVRDTRGR (239 aa)) form the Radical SAM core domain. An intrachain disulfide couples C119 to C356. Residues C126, C130, and C133 each contribute to the [4Fe-4S] cluster site. Residues 177–178 (GE), S211, 234–236 (SLH), and N313 contribute to the S-adenosyl-L-methionine site. Catalysis depends on C356, which acts as the S-methylcysteine intermediate.

It belongs to the radical SAM superfamily. RlmN family. It depends on [4Fe-4S] cluster as a cofactor.

Its subcellular location is the cytoplasm. The enzyme catalyses adenosine(2503) in 23S rRNA + 2 reduced [2Fe-2S]-[ferredoxin] + 2 S-adenosyl-L-methionine = 2-methyladenosine(2503) in 23S rRNA + 5'-deoxyadenosine + L-methionine + 2 oxidized [2Fe-2S]-[ferredoxin] + S-adenosyl-L-homocysteine. The catalysed reaction is adenosine(37) in tRNA + 2 reduced [2Fe-2S]-[ferredoxin] + 2 S-adenosyl-L-methionine = 2-methyladenosine(37) in tRNA + 5'-deoxyadenosine + L-methionine + 2 oxidized [2Fe-2S]-[ferredoxin] + S-adenosyl-L-homocysteine. Functionally, specifically methylates position 2 of adenine 2503 in 23S rRNA and position 2 of adenine 37 in tRNAs. The protein is Probable dual-specificity RNA methyltransferase RlmN of Mycobacterium bovis (strain ATCC BAA-935 / AF2122/97).